Reading from the N-terminus, the 402-residue chain is Putative cytochrome P450 133B1 (402 aa).

Cysteine 348 lines the heme pocket.

It belongs to the cytochrome P450 family. Heme is required as a cofactor.

The chain is Putative cytochrome P450 133B1 (cyp133B1) from Xylella fastidiosa (strain 9a5c).